Reading from the N-terminus, the 214-residue chain is Putative archaetidylserine decarboxylase proenzyme (214 aa).

The active-site Schiff-base intermediate with substrate; via pyruvic acid is the Ser-180. The residue at position 180 (Ser-180) is a Pyruvic acid (Ser); by autocatalysis.

It belongs to the phosphatidylserine decarboxylase family. PSD-A subfamily. As to quaternary structure, heterodimer of a large membrane-associated beta subunit and a small pyruvoyl-containing alpha subunit. Requires pyruvate as cofactor. Is synthesized initially as an inactive proenzyme. Formation of the active enzyme involves a self-maturation process in which the active site pyruvoyl group is generated from an internal serine residue via an autocatalytic post-translational modification. Two non-identical subunits are generated from the proenzyme in this reaction, and the pyruvate is formed at the N-terminus of the alpha chain, which is derived from the carboxyl end of the proenzyme. The post-translation cleavage follows an unusual pathway, termed non-hydrolytic serinolysis, in which the side chain hydroxyl group of the serine supplies its oxygen atom to form the C-terminus of the beta chain, while the remainder of the serine residue undergoes an oxidative deamination to produce ammonia and the pyruvoyl prosthetic group on the alpha chain.

The protein resides in the cell membrane. It carries out the reaction archaetidylserine + H(+) = archaetidylethanolamine + CO2. Its function is as follows. Catalyzes the formation of archaetidylethanolamine (PtdEtn) from archaetidylserine (PtdSer). The chain is Putative archaetidylserine decarboxylase proenzyme from Methanopyrus kandleri (strain AV19 / DSM 6324 / JCM 9639 / NBRC 100938).